Reading from the N-terminus, the 343-residue chain is Protein RecA (343 aa).

66-73 (GPESSGKT) contacts ATP.

It belongs to the RecA family.

The protein localises to the cytoplasm. Functionally, can catalyze the hydrolysis of ATP in the presence of single-stranded DNA, the ATP-dependent uptake of single-stranded DNA by duplex DNA, and the ATP-dependent hybridization of homologous single-stranded DNAs. It interacts with LexA causing its activation and leading to its autocatalytic cleavage. In Dechloromonas aromatica (strain RCB), this protein is Protein RecA.